A 658-amino-acid chain; its full sequence is Katanin p80 WD40 repeat-containing subunit B1 (658 aa).

The interaction with dynein stretch occupies residues M1 to Q284. An interaction with centrosomes region spans residues M1 to V300. WD repeat units lie at residues A18–S58, G61–T100, G103–R142, G145–E184, G187–C226, and G229–L269. The interaction with PAFAH1B1 stretch occupies residues L285–E437. A compositionally biased stretch (polar residues) spans V311–P329. Disordered regions lie at residues V311 to K419 and P434 to I458. The segment covering H352–A374 has biased composition (basic and acidic residues). T395 carries the phosphothreonine modification. Positions L436–D658 are interaction with KATNA1 and NDEL1.

It belongs to the WD repeat KATNB1 family. Interacts with KATNA1. This interaction enhances the microtubule binding and severing activity of KATNA1 and also targets this activity to the centrosome. This interaction is weakly competed by KATNBL1 which has a lower affinity for it. Interacts with ASPM; the katanin complex formation KATNA1:KATNB1 is required for the association of ASPM. Interacts with dynein, microtubules, NDEL1 and PAFAH1B1. Interacts with KATNAL1; this interaction is weakly competed by KATNBL1 which has a lower affinity for it. Interacts with CAMSAP2 and CAMSAP3; leading to regulate the length of CAMSAP-decorated microtubule stretches.

The protein localises to the cytoplasm. It localises to the cytoskeleton. The protein resides in the microtubule organizing center. It is found in the centrosome. Its subcellular location is the spindle pole. The protein localises to the spindle. Functionally, participates in a complex which severs microtubules in an ATP-dependent manner. May act to target the enzymatic subunit of this complex to sites of action such as the centrosome. Microtubule severing may promote rapid reorganization of cellular microtubule arrays and the release of microtubules from the centrosome following nucleation. Microtubule release from the mitotic spindle poles may allow depolymerization of the microtubule end proximal to the spindle pole, leading to poleward microtubule flux and poleward motion of chromosome. The function in regulating microtubule dynamics at spindle poles seems to depend on the association of the katanin KATNA1:KATNB1 complex with ASPM which recruits it to microtubules. Reversely KATNA1:KATNB1 can enhance ASPM blocking activity on microtubule minus-end growth. Microtubule release within the cell body of neurons may be required for their transport into neuronal processes by microtubule-dependent motor proteins. This transport is required for axonal growth. This is Katanin p80 WD40 repeat-containing subunit B1 (Katnb1) from Mus musculus (Mouse).